Reading from the N-terminus, the 482-residue chain is tRNA sulfurtransferase (482 aa).

In terms of domain architecture, THUMP spans aspartate 61–arginine 165. ATP contacts are provided by residues leucine 183–isoleucine 184, lysine 265, glycine 287, and glutamine 296. A disulfide bridge connects residues cysteine 344 and cysteine 456. Residues leucine 404–proline 482 form the Rhodanese domain. Cysteine 456 (cysteine persulfide intermediate) is an active-site residue.

This sequence belongs to the ThiI family.

The protein resides in the cytoplasm. It catalyses the reaction [ThiI sulfur-carrier protein]-S-sulfanyl-L-cysteine + a uridine in tRNA + 2 reduced [2Fe-2S]-[ferredoxin] + ATP + H(+) = [ThiI sulfur-carrier protein]-L-cysteine + a 4-thiouridine in tRNA + 2 oxidized [2Fe-2S]-[ferredoxin] + AMP + diphosphate. The catalysed reaction is [ThiS sulfur-carrier protein]-C-terminal Gly-Gly-AMP + S-sulfanyl-L-cysteinyl-[cysteine desulfurase] + AH2 = [ThiS sulfur-carrier protein]-C-terminal-Gly-aminoethanethioate + L-cysteinyl-[cysteine desulfurase] + A + AMP + 2 H(+). It functions in the pathway cofactor biosynthesis; thiamine diphosphate biosynthesis. Catalyzes the ATP-dependent transfer of a sulfur to tRNA to produce 4-thiouridine in position 8 of tRNAs, which functions as a near-UV photosensor. Also catalyzes the transfer of sulfur to the sulfur carrier protein ThiS, forming ThiS-thiocarboxylate. This is a step in the synthesis of thiazole, in the thiamine biosynthesis pathway. The sulfur is donated as persulfide by IscS. This is tRNA sulfurtransferase from Aliivibrio fischeri (strain MJ11) (Vibrio fischeri).